A 360-amino-acid chain; its full sequence is Nucleoporin SEH1-B (360 aa).

WD repeat units lie at residues 10-49 (DHKD…NWHC), 55-96 (THSG…SNDK), 111-152 (DSRT…NLSQ), 160-210 (SCKL…RKYA), 217-258 (SVSD…KELS), and 276-315 (NHNS…NWKC).

Belongs to the WD repeat SEC13 family. In terms of assembly, component of the Nup107-160 subcomplex of the nuclear pore complex (NPC). The Nup107-160 subcomplex includes NUP160, NUP133, NUP107, NUP98, NUP85, NUP43, NUP37, SEH1 and SEC13. Component of the GATOR2 subcomplex, composed of MIOS, SEC13, SEH1L, WDR24 and WDR59. The GATOR2 complex interacts with CASTOR1 and CASTOR2; the interaction is negatively regulated by arginine. The GATOR2 complex interacts with SESN1, SESN2 and SESN3; the interaction is negatively regulated by amino acids.

The protein resides in the chromosome. Its subcellular location is the centromere. It localises to the kinetochore. The protein localises to the nucleus. It is found in the nuclear pore complex. The protein resides in the lysosome membrane. The GATOR2 complex is negatively regulated by the upstream amino acid sensors CASTOR1 and SESN2, which sequester the GATOR2 complex in absence of amino acids. In the presence of abundant amino acids, GATOR2 is released from CASTOR1 and SESN2 and activated. Functionally, component of the Nup107-160 subcomplex of the nuclear pore complex (NPC). The Nup107-160 subcomplex is required for the assembly of a functional NPC. The Nup107-160 subcomplex is also required for normal kinetochore microtubule attachment, mitotic progression and chromosome segregation. This subunit plays a role in recruitment of the Nup107-160 subcomplex to the kinetochore. Its function is as follows. As a component of the GATOR2 complex, functions as an activator of the amino acid-sensing branch of the mTORC1 signaling pathway. The GATOR2 complex indirectly activates mTORC1 through the inhibition of the GATOR1 subcomplex. GATOR2 probably acts as an E3 ubiquitin-protein ligase toward GATOR1. In the presence of abundant amino acids, the GATOR2 complex mediates ubiquitination of the NPRL2 core component of the GATOR1 complex, leading to GATOR1 inactivation. In the absence of amino acids, GATOR2 is inhibited, activating the GATOR1 complex. The chain is Nucleoporin SEH1-B (seh1l-b) from Xenopus laevis (African clawed frog).